A 327-amino-acid polypeptide reads, in one-letter code: Annexin A8 (327 aa).

Annexin repeat units follow at residues 21 to 92, 93 to 164, 177 to 249, and 253 to 324; these read FNPD…ALMY, PPYR…CLLQ, GLAL…TVVK, and NLHS…SLVG. Ca(2+) contacts are provided by Met266, Gly268, Gly270, and Asp310.

This sequence belongs to the annexin family.

Functionally, this protein is an anticoagulant protein that acts as an indirect inhibitor of the thromboplastin-specific complex, which is involved in the blood coagulation cascade. The polypeptide is Annexin A8 (ANXA8) (Pan troglodytes (Chimpanzee)).